The primary structure comprises 283 residues: Nucleoid occlusion protein (283 aa).

A disordered region spans residues 1-26 (MKQPFSRLFGFGDKQDQEMETGKQEE). Over residues 13 to 26 (DKQDQEMETGKQEE) the composition is skewed to basic and acidic residues. A DNA-binding region (H-T-H motif) is located at residues 143–162 (ESLAQRLGKGQSTIANKLRL).

It belongs to the ParB family.

The protein localises to the cytoplasm. Its subcellular location is the nucleoid. Its function is as follows. Effects nucleoid occlusion by binding relatively nonspecifically to DNA and preventing the assembly of the division machinery in the vicinity of the nucleoid, especially under conditions that disturb the cell cycle. It helps to coordinate cell division and chromosome segregation by preventing the formation of the Z ring through the nucleoid, which would cause chromosome breakage. This Halalkalibacterium halodurans (strain ATCC BAA-125 / DSM 18197 / FERM 7344 / JCM 9153 / C-125) (Bacillus halodurans) protein is Nucleoid occlusion protein.